Consider the following 251-residue polypeptide: Triosephosphate isomerase (251 aa).

Asparagine 9–lysine 11 provides a ligand contact to substrate. Residue histidine 95 is the Electrophile of the active site. Glutamate 167 serves as the catalytic Proton acceptor. Substrate-binding positions include glycine 173, serine 212, and glycine 233–glycine 234.

Belongs to the triosephosphate isomerase family. Homodimer.

It is found in the cytoplasm. It catalyses the reaction D-glyceraldehyde 3-phosphate = dihydroxyacetone phosphate. It functions in the pathway carbohydrate biosynthesis; gluconeogenesis. It participates in carbohydrate degradation; glycolysis; D-glyceraldehyde 3-phosphate from glycerone phosphate: step 1/1. In terms of biological role, involved in the gluconeogenesis. Catalyzes stereospecifically the conversion of dihydroxyacetone phosphate (DHAP) to D-glyceraldehyde-3-phosphate (G3P). This is Triosephosphate isomerase from Vibrio sp. (strain ANT-300).